Consider the following 590-residue polypeptide: Beta-glucosidase 29 (590 aa).

The signal sequence occupies residues 1 to 21; sequence MNVQIFILLLIISWLTPKITS. A beta-D-glucoside is bound by residues Gln-48, His-151, and 196 to 197; that span reads NE. The Proton donor role is filled by Glu-197. Residues Cys-216 and Cys-224 are joined by a disulfide bond. Residues Asn-255 and Asn-331 are each glycosylated (N-linked (GlcNAc...) asparagine). Position 341 (Tyr-341) interacts with a beta-D-glucoside. Asn-371 carries N-linked (GlcNAc...) asparagine glycosylation. A beta-D-glucoside is bound by residues Glu-413, Trp-463, 470-471, and Phe-479; that span reads EW. Glu-413 (nucleophile) is an active-site residue. N-linked (GlcNAc...) asparagine glycosylation is found at Asn-522 and Asn-553.

Belongs to the glycosyl hydrolase 1 family.

It carries out the reaction Hydrolysis of terminal, non-reducing beta-D-glucosyl residues with release of beta-D-glucose.. This Arabidopsis thaliana (Mouse-ear cress) protein is Beta-glucosidase 29.